Reading from the N-terminus, the 174-residue chain is Trypsin inhibitor BvTI (174 aa).

Disulfide bonds link Cys41–Cys84 and Cys131–Cys138.

It belongs to the protease inhibitor I3 (leguminous Kunitz-type inhibitor) family.

It is found in the secreted. In terms of biological role, inhibits bovine trypsin and chymotrypsin, and human plasmin, plasma kallikrein and factor XIIa. The chain is Trypsin inhibitor BvTI from Bauhinia variegata (Purple orchid tree).